A 327-amino-acid chain; its full sequence is tRNA N6-adenosine threonylcarbamoyltransferase (327 aa).

Residues histidine 109 and histidine 113 each coordinate Fe cation. Substrate is bound by residues 132–136 (MVSGG), aspartate 165, glycine 178, aspartate 182, and asparagine 268. Aspartate 296 contacts Fe cation.

This sequence belongs to the KAE1 / TsaD family. Fe(2+) is required as a cofactor.

It localises to the cytoplasm. The enzyme catalyses L-threonylcarbamoyladenylate + adenosine(37) in tRNA = N(6)-L-threonylcarbamoyladenosine(37) in tRNA + AMP + H(+). Its function is as follows. Required for the formation of a threonylcarbamoyl group on adenosine at position 37 (t(6)A37) in tRNAs that read codons beginning with adenine. Is involved in the transfer of the threonylcarbamoyl moiety of threonylcarbamoyl-AMP (TC-AMP) to the N6 group of A37, together with TsaE and TsaB. TsaD likely plays a direct catalytic role in this reaction. This is tRNA N6-adenosine threonylcarbamoyltransferase from Thermotoga petrophila (strain ATCC BAA-488 / DSM 13995 / JCM 10881 / RKU-1).